A 667-amino-acid chain; its full sequence is DNA ligase (667 aa).

Residues 32–36 (DSEYD), 81–82 (SL), and Glu-110 each bind NAD(+). The active-site N6-AMP-lysine intermediate is Lys-112. NAD(+) contacts are provided by Arg-133, Glu-167, Lys-283, and Lys-307. Positions 401, 404, 419, and 424 each coordinate Zn(2+). A BRCT domain is found at 586–667 (EGHPEFSGKT…FVDKQNELNS (82 aa)).

The protein belongs to the NAD-dependent DNA ligase family. LigA subfamily. The cofactor is Mg(2+). Mn(2+) is required as a cofactor.

It carries out the reaction NAD(+) + (deoxyribonucleotide)n-3'-hydroxyl + 5'-phospho-(deoxyribonucleotide)m = (deoxyribonucleotide)n+m + AMP + beta-nicotinamide D-nucleotide.. DNA ligase that catalyzes the formation of phosphodiester linkages between 5'-phosphoryl and 3'-hydroxyl groups in double-stranded DNA using NAD as a coenzyme and as the energy source for the reaction. It is essential for DNA replication and repair of damaged DNA. In Staphylococcus aureus (strain Mu3 / ATCC 700698), this protein is DNA ligase.